Consider the following 217-residue polypeptide: Uracil-DNA glycosylase (217 aa).

Catalysis depends on Asp-62, which acts as the Proton acceptor.

It belongs to the uracil-DNA glycosylase (UDG) superfamily. UNG family.

It localises to the cytoplasm. The catalysed reaction is Hydrolyzes single-stranded DNA or mismatched double-stranded DNA and polynucleotides, releasing free uracil.. Excises uracil residues from the DNA which can arise as a result of misincorporation of dUMP residues by DNA polymerase or due to deamination of cytosine. This Streptococcus thermophilus (strain ATCC BAA-491 / LMD-9) protein is Uracil-DNA glycosylase.